A 226-amino-acid polypeptide reads, in one-letter code: tRNA (guanine-N(7)-)-methyltransferase (226 aa).

S-adenosyl-L-methionine-binding residues include Glu59, Glu84, Asp111, and Asp134. Asp134 is a catalytic residue. A substrate-binding site is contributed by Lys138. Residues 140–145 form an interaction with RNA region; that stretch reads RHNKRR. Residues Asp170 and 205–208 contribute to the substrate site; that span reads TKFE.

It belongs to the class I-like SAM-binding methyltransferase superfamily. TrmB family.

The catalysed reaction is guanosine(46) in tRNA + S-adenosyl-L-methionine = N(7)-methylguanosine(46) in tRNA + S-adenosyl-L-homocysteine. It functions in the pathway tRNA modification; N(7)-methylguanine-tRNA biosynthesis. Functionally, catalyzes the formation of N(7)-methylguanine at position 46 (m7G46) in tRNA. This Chromobacterium violaceum (strain ATCC 12472 / DSM 30191 / JCM 1249 / CCUG 213 / NBRC 12614 / NCIMB 9131 / NCTC 9757 / MK) protein is tRNA (guanine-N(7)-)-methyltransferase.